The primary structure comprises 395 residues: MAVTDSLSRAATVLATVLLLSFGSVAASHIEDQAEQFFRSGHTNNWAVLVCTSRFWFNYRHVANTLSVYRSVKRLGIPDSHIVLMLADDMACNPRNPKPATVFSHKNMELNVYGDDVEVDYRSYEVTVENFLRVLTGRIPPSTPRSKRLLSDDRSNILIYMTGHGGNGFLKFQDSEEITNIELADAFEQMWQKRRYNELLFIIDTCQGASMYERFYSPNIMALASSQVGEDSLSHQPDPAIGVHLMDRYTFYVLEFLEEINPASQTNMNDLFQVCPKSLCVSTPGHRTDLFQRDPKNVLITDFFGSVRKVEITTETIKLQQDSEIMESSYKEDQMDEKLMEPLKYAEQLPVAQIIHQKPKLKDWHPPGGFILGLWALIIMVFFKTYGIKHMKFIF.

The signal sequence occupies residues 1-27 (MAVTDSLSRAATVLATVLLLSFGSVAA). At 28-368 (SHIEDQAEQF…PKLKDWHPPG (341 aa)) the chain is on the lumenal side. Residues Asp79, Ile82, Glu118, and Asp120 each contribute to the Ca(2+) site. Residue His164 is the Proton donor of the active site. Catalysis depends on Cys206, which acts as the Nucleophile; acyl-thioester intermediate. Positions 206, 232, and 234 each coordinate a protein. An autoinhibitory loop region spans residues 231–236 (DSLSHQ). The cysteines at positions 275 and 280 are disulfide-linked. The chain crosses the membrane as a helical span at residues 369 to 385 (GFILGLWALIIMVFFKT). At 386 to 395 (YGIKHMKFIF) the chain is on the cytoplasmic side.

It belongs to the peptidase C13 family. In terms of assembly, heteropentamer. Part of the GPI-anchor transamidase complex, consisting of PIGK, PIGT, PIGS, PIGU and GAA1. Interacts with GPAA1. Interacts with PIGT; this interaction, via a disulfide link, stabilizes the expression of GAA1 and PIGK and links them to PIGS. Post-translationally, the disulfide bond between PIGK/GPI8 and PIGT is important for normal enzyme activity.

Its subcellular location is the endoplasmic reticulum membrane. It participates in glycolipid biosynthesis; glycosylphosphatidylinositol-anchor biosynthesis. Its activity is regulated as follows. In the absence of proproteins substrates, exists in an inactive state with a disrupted catalytic site by an autoinhibitory loop. The binding of proprotein substrates, particularly the CSP region, to GPI-T triggers concerted conformational changes that alleviate the inhibition by the autoinhibitory loop. Meanwhile, proprotein residues near the omega- site induce the formation of a catalytic cleft for catalysis, following which the products are released and GPI-T reverts to the inactive state. Catalytic subunit of the glycosylphosphatidylinositol-anchor (GPI-anchor) transamidase (GPI-T) complex that catalyzes the formation of the linkage between a proprotein and a GPI-anchor and participates in GPI anchored protein biosynthesis. Recognizes diverse proproteins at a C-terminal signal peptide (CSP) region that lacks consensus sequence and replaces it with a GPI-anchor via a transamidation reaction. Transamidation catalysis reaction follows a two-phase mechanism. In the acyl-enzyme phase, the carbonyl group of the proproteins's omega-site undergoes a nucleophilic attack forming an enzyme-substrate thioester bond. Followed by a general acid catalysis that allows CSP releasing, regenerating the carbonyl, and forming the acyl-enzyme intermediate. In the GPI-anchor attachment phase, the amino group of the GPI-anchor's ethanolamine phosphate, the one on third mannose (EtNP3), mediates a nucleophilic attack on the carbonyl of the acyl-enzyme intermediate, replacing the CSP, allowing GPI-anchor attachment to the omega-residue, therefore forming the product and freeing the enzyme. This chain is GPI-anchor transamidase, found in Homo sapiens (Human).